The sequence spans 383 residues: Putative glutamate--cysteine ligase 2 (383 aa).

The protein belongs to the glutamate--cysteine ligase type 2 family. YbdK subfamily.

It catalyses the reaction L-cysteine + L-glutamate + ATP = gamma-L-glutamyl-L-cysteine + ADP + phosphate + H(+). In terms of biological role, ATP-dependent carboxylate-amine ligase which exhibits weak glutamate--cysteine ligase activity. The chain is Putative glutamate--cysteine ligase 2 from Clavibacter michiganensis subsp. michiganensis (strain NCPPB 382).